The sequence spans 115 residues: Large ribosomal subunit protein uL18 (115 aa).

Belongs to the universal ribosomal protein uL18 family. Part of the 50S ribosomal subunit; part of the 5S rRNA/L5/L18/L25 subcomplex. Contacts the 5S and 23S rRNAs.

Its function is as follows. This is one of the proteins that bind and probably mediate the attachment of the 5S RNA into the large ribosomal subunit, where it forms part of the central protuberance. In Baumannia cicadellinicola subsp. Homalodisca coagulata, this protein is Large ribosomal subunit protein uL18.